A 157-amino-acid chain; its full sequence is Crossover junction endodeoxyribonuclease RuvC (157 aa).

Active-site residues include D7, E67, and D140. Mg(2+)-binding residues include D7, E67, and D140.

It belongs to the RuvC family. Homodimer which binds Holliday junction (HJ) DNA. The HJ becomes 2-fold symmetrical on binding to RuvC with unstacked arms; it has a different conformation from HJ DNA in complex with RuvA. In the full resolvosome a probable DNA-RuvA(4)-RuvB(12)-RuvC(2) complex forms which resolves the HJ. The cofactor is Mg(2+).

It localises to the cytoplasm. It carries out the reaction Endonucleolytic cleavage at a junction such as a reciprocal single-stranded crossover between two homologous DNA duplexes (Holliday junction).. Functionally, the RuvA-RuvB-RuvC complex processes Holliday junction (HJ) DNA during genetic recombination and DNA repair. Endonuclease that resolves HJ intermediates. Cleaves cruciform DNA by making single-stranded nicks across the HJ at symmetrical positions within the homologous arms, yielding a 5'-phosphate and a 3'-hydroxyl group; requires a central core of homology in the junction. The consensus cleavage sequence is 5'-(A/T)TT(C/G)-3'. Cleavage occurs on the 3'-side of the TT dinucleotide at the point of strand exchange. HJ branch migration catalyzed by RuvA-RuvB allows RuvC to scan DNA until it finds its consensus sequence, where it cleaves and resolves the cruciform DNA. This is Crossover junction endodeoxyribonuclease RuvC from Rickettsia bellii (strain OSU 85-389).